The following is a 355-amino-acid chain: MLNRSIHEITLPLKVIIGSNILDKIPDYLLKMKLTNQYKAGIITGPTTYNVAGKIVEEAMKNNGYIVEVWKARDARIETANQIVEETKKHGIKIFLGVGGGKSIDLAKYAAYKNNGYMISVPTAASHDGIASPFASLKGTSKPTSTPTTTPYAIIADIDMISKAPPRLIRSGVGDLLGKLTAVKDWQLAHRLKGEYYGEYAAQLALLSAKHVIRYHELIASGNPDGIRIVVEALISSGVAMCIAGSSRPASGSEHLFSHALDLLAPGKALHGEQVALGTIMMLYLYGDPKWKKIKRIMKKIGLPTTAEEIGIPIETIVKALTIAHKIRPNRYTILGEKGLTEEAAWRLVRETGII.

NAD(+) is bound by residues Gly101 to Asp105 and Thr123 to Ser126. Substrate is bound at residue Asp128. Ser132 is a binding site for NAD(+). Asp175 serves as a coordination point for substrate. Zn(2+) is bound by residues Asp175 and His255. His259 serves as a coordination point for substrate. His271 lines the Zn(2+) pocket.

The protein belongs to the glycerol-1-phosphate dehydrogenase family. Homodimer. Zn(2+) is required as a cofactor.

It is found in the cytoplasm. The enzyme catalyses sn-glycerol 1-phosphate + NAD(+) = dihydroxyacetone phosphate + NADH + H(+). The catalysed reaction is sn-glycerol 1-phosphate + NADP(+) = dihydroxyacetone phosphate + NADPH + H(+). The protein operates within membrane lipid metabolism; glycerophospholipid metabolism. Catalyzes the NAD(P)H-dependent reduction of dihydroxyacetonephosphate (DHAP or glycerone phosphate) to glycerol 1-phosphate (G1P). The G1P thus generated is used as the glycerophosphate backbone of phospholipids in the cellular membranes of Archaea. The protein is Glycerol-1-phosphate dehydrogenase [NAD(P)+] of Staphylothermus marinus (strain ATCC 43588 / DSM 3639 / JCM 9404 / F1).